The chain runs to 130 residues: Cuticle protein 14 isoform b (130 aa).

The 67-residue stretch at 24–90 (IGNYNFGYNE…NVHTNEPGTD (67 aa)) folds into the Chitin-binding type R&amp;R domain.

The protein is Cuticle protein 14 isoform b of Limulus polyphemus (Atlantic horseshoe crab).